Consider the following 479-residue polypeptide: UDP-glucose flavonoid 3-O-glucosyltransferase 6 (479 aa).

Residue H17 is the Proton acceptor of the active site. H17 contributes to the an anthocyanidin binding site. Residue D121 is the Charge relay of the active site. The UDP-alpha-D-glucose site is built by T143, A354, Q356, H371, W374, N375, S376, and E379. An an anthocyanidin-binding site is contributed by A394. UDP-alpha-D-glucose is bound by residues E395 and Q396. Residues 454 to 479 (MSRKALEEDGSSYSSLGRFLDQIQTS) form a disordered region.

This sequence belongs to the UDP-glycosyltransferase family. As to expression, strongly expressed in achenes, with lower expression levels detected in receptacles.

The catalysed reaction is a flavonol + UDP-alpha-D-glucose = a flavonol 3-O-beta-D-glucoside + UDP + H(+). Broad spectrum multifunctional glucosyltransferase. Catalyzes the formation of flavonol 3-O-glucosides during fruit ripening. Accepted substrates include several flavonoids, hydroxycoumarins and beta-naphthols. Uses UDP-Glc as a sugar donor, but not UDP-Gal or UDP-GlcUA. May also be involved in detoxification of xenobiotics. The sequence is that of UDP-glucose flavonoid 3-O-glucosyltransferase 6 from Fragaria ananassa (Strawberry).